The primary structure comprises 1052 residues: SE-cephalotoxin (1052 aa).

The signal sequence occupies residues 1 to 21 (MMGTSRCVILLFALLLWAANA). Residues 22–29 (APPEIHTT) constitute a propeptide that is removed on maturation. Residue asparagine 41 is glycosylated (N-linked (GlcNAc...) asparagine). The stretch at 130–194 (TGVNRKLDQI…DMNKRRLMAE (65 aa)) forms a coiled coil. A glycan (N-linked (GlcNAc...) asparagine) is linked at asparagine 353. In terms of domain architecture, EGF-like spans 460-497 (PGNPCNHGCNGHGECKVVPYTDQFQCFCHGNYEGKMCQ). 3 disulfides stabilise this stretch: cysteine 464/cysteine 474, cysteine 468/cysteine 485, and cysteine 487/cysteine 496. N-linked (GlcNAc...) asparagine glycosylation is found at asparagine 576 and asparagine 715. The Sushi domain occupies 709-769 (TSCPPLNVTH…QWSATPKCES (61 aa)). 7 cysteine pairs are disulfide-bonded: cysteine 711–cysteine 752, cysteine 739–cysteine 767, cysteine 780–cysteine 814, cysteine 784–cysteine 820, cysteine 795–cysteine 804, cysteine 829–cysteine 847, and cysteine 841–cysteine 858. A TSP type-1 domain is found at 768 to 821 (ESSWSRWSKWSACASTCGNATQSRRRRCLGQSESEKCIGPSKQVRKCFVEDCCQ). A glycan (N-linked (GlcNAc...) asparagine) is linked at asparagine 786. Positions 819 to 859 (CCQEKYGKFKCDNNKCISLSRVCDGNDDCRNAEDESKSRCK) constitute an LDL-receptor class A domain.

Monomer. Expressed by the salivary gland.

The protein resides in the secreted. The chain is SE-cephalotoxin from Acanthosepion esculentum (Golden cuttlefish).